A 574-amino-acid polypeptide reads, in one-letter code: MSRRLIYVLNINRKSTHKIQENEIYTYFSHCNIDHTSTELDFVVKNYDLNRRQHVTGYTALHCYLYNNYFTNDVLKILLNHDVNVTMKTSSGRMPVYILLTRCCNISHDVVIDMIDKDKNHLSHRDYSNLLLEYIKSRYMLLKEEDIDENIVSTLLDKGIDPNFKQDGYTALHYYYLCLAHVYKPGECRKPITIKKAKRIISLFIQHGANLNALDNCGNTPFHLYLSIEMCNNIHMTKMLLTFNPNFKICNNHGLTPILCYITSDYIQHDILVMLIHHYETNVGEMPIDERRMIVFEFIKTYSTRPADSITYLMNRFKNINIYTRYEGKTLLHVACEYNNTQVIDYLIRINGDINALTDNNKHATQLIIDNKENSPYTINCLLYILRYIVDKNVIRSLVDQLPSLPIFDIKSFEKFISYCILLDDTFYDRHVKNRDSKTYRYAFSKYMSFDKYDGIITKCHDETMLLKLSTVLDTTLYAVLRCHNSRKLRRYLTELKKYNNDKSFKIYSNIMNERYLNVYYKDMYVSKVYDKLFPVFTDKNCLLTLLPSEIIYEILYMLTINDLYNISYPPTKV.

6 ANK repeats span residues 56 to 87 (TGYT…NVTM), 135 to 164 (IKSR…DPNF), 167 to 213 (DGYT…NLNA), 217 to 249 (CGNT…NFKI), 253 to 285 (HGLT…NVGE), and 327 to 356 (EGKT…DINA). The 34-residue stretch at 541-574 (NCLLTLLPSEIIYEILYMLTINDLYNISYPPTKV) folds into the F-box domain.

The chain is Ankyrin repeat protein B18 from Homo sapiens (Human).